The primary structure comprises 142 residues: MAKKIQSYIKLQVSAGAANPSPPIGPALGQKGVNIMEFCKLFNKKTENIEKGLPIPVIITVYSDRSFTFITKTPPASVLLKKLSGIKKGSSKNKSEKIGKINRSQIKEIAIIKNNDMTGSNIENMMRSIEGTAKSMGLIIEG.

This sequence belongs to the universal ribosomal protein uL11 family. In terms of assembly, part of the ribosomal stalk of the 50S ribosomal subunit. Interacts with L10 and the large rRNA to form the base of the stalk. L10 forms an elongated spine to which L12 dimers bind in a sequential fashion forming a multimeric L10(L12)X complex. In terms of processing, one or more lysine residues are methylated.

Its function is as follows. Forms part of the ribosomal stalk which helps the ribosome interact with GTP-bound translation factors. The chain is Large ribosomal subunit protein uL11 from Buchnera aphidicola subsp. Acyrthosiphon pisum (strain APS) (Acyrthosiphon pisum symbiotic bacterium).